The primary structure comprises 422 residues: Serine protease HTRA2, mitochondrial (422 aa).

The N-terminal 17 residues, 1 to 17 (MALRGCHRLEVIFKRCI), are a transit peptide targeting the mitochondrion. The propeptide occupies 18-74 (ASPVLHSQAGNRRSSQLAIKGVDPNSNGNSGQYQQNGEHKEKGWRRLVRFFVPFSLG). Positions 33–55 (QLAIKGVDPNSNGNSGQYQQNGE) are disordered. The segment covering 42-53 (NSNGNSGQYQQN) has biased composition (low complexity). Residues 64–82 (LVRFFVPFSLGAAVSAAII) form a helical membrane-spanning segment. Short sequence motifs (IAP-binding) lie at residues 75–78 (AAVS) and 94–97 (SKMT). The interval 139-302 (SNGSGFIIEQ…IPIDYVKVFL (164 aa)) is serine protease. Residues His-157, Asp-189, and Ser-266 each act as charge relay system in the active site. Residues 325-410 (MGITMLTLTP…TLDIVILRGV (86 aa)) enclose the PDZ domain.

It belongs to the peptidase S1C family. As to quaternary structure, interacts with th/DIAP1 (via BIR 2 domain).

The protein localises to the mitochondrion intermembrane space. Its subcellular location is the mitochondrion membrane. It catalyses the reaction Cleavage of non-polar aliphatic amino-acids at the P1 position, with a preference for Val, Ile and Met. At the P2 and P3 positions, Arg is selected most strongly with a secondary preference for other hydrophilic residues.. Serine protease that shows proteolytic activity against a non-specific substrate beta-casein. Promotes or induces cell death either by direct binding to and inhibition of BIRC proteins (also called inhibitor of apoptosis proteins, IAPs), leading to an increase in caspase activity, or by a BIRC inhibition-independent, caspase-independent and serine protease activity-dependent mechanism. Can antagonize antiapoptotic activity of th/Diap1 by directly inducing the degradation of th/Diap1. This is Serine protease HTRA2, mitochondrial from Drosophila simulans (Fruit fly).